The sequence spans 412 residues: Alanyl-tRNA editing protein Aarsd1-A (412 aa).

Residues histidine 108, histidine 112, cysteine 208, and histidine 212 each contribute to the Zn(2+) site.

The protein belongs to the class-II aminoacyl-tRNA synthetase family. Alax-L subfamily. The cofactor is Zn(2+).

It is found in the cytoplasm. Its function is as follows. Functions in trans to edit the amino acid moiety from incorrectly charged tRNA(Ala). This Xenopus laevis (African clawed frog) protein is Alanyl-tRNA editing protein Aarsd1-A (aarsd1-a).